Here is a 170-residue protein sequence, read N- to C-terminus: Protein BofC (170 aa).

The signal sequence occupies residues 1-30; sequence MKRFSTAYLLLGILCSAAVFLIGAPSRALG.

In terms of assembly, monomer.

Its subcellular location is the forespore intermembrane space. Inhibits the SpoIVB zymogen from undergoing autocatalytic activation by an unknown mechanism, and in this way plays a role in the sigma-K checkpoint of sporulation. In Bacillus subtilis (strain 168), this protein is Protein BofC (bofC).